We begin with the raw amino-acid sequence, 185 residues long: Ribosome-recycling factor (185 aa).

This sequence belongs to the RRF family.

The protein resides in the cytoplasm. In terms of biological role, responsible for the release of ribosomes from messenger RNA at the termination of protein biosynthesis. May increase the efficiency of translation by recycling ribosomes from one round of translation to another. This Xylella fastidiosa (strain 9a5c) protein is Ribosome-recycling factor.